The sequence spans 450 residues: UDP-N-acetylmuramoylalanine--D-glutamate ligase (450 aa).

ATP is bound at residue 119 to 125; that stretch reads GSNGKTT.

Belongs to the MurCDEF family.

The protein localises to the cytoplasm. The catalysed reaction is UDP-N-acetyl-alpha-D-muramoyl-L-alanine + D-glutamate + ATP = UDP-N-acetyl-alpha-D-muramoyl-L-alanyl-D-glutamate + ADP + phosphate + H(+). The protein operates within cell wall biogenesis; peptidoglycan biosynthesis. In terms of biological role, cell wall formation. Catalyzes the addition of glutamate to the nucleotide precursor UDP-N-acetylmuramoyl-L-alanine (UMA). This chain is UDP-N-acetylmuramoylalanine--D-glutamate ligase, found in Bacillus thuringiensis (strain Al Hakam).